The sequence spans 309 residues: HPr kinase/phosphorylase (309 aa).

Active-site residues include H138 and K159. 153 to 160 (GQSGVGKS) is a binding site for ATP. S160 is a binding site for Mg(2+). The Proton acceptor; for phosphorylation activity. Proton donor; for dephosphorylation activity role is filled by D177. The important for the catalytic mechanism of both phosphorylation and dephosphorylation stretch occupies residues 201 to 210 (LEIRGLGIIN). E202 serves as a coordination point for Mg(2+). R243 is an active-site residue. Residues 264 to 269 (PVRPGR) form an important for the catalytic mechanism of dephosphorylation region.

The protein belongs to the HPrK/P family. Homohexamer. Mg(2+) serves as cofactor.

It catalyses the reaction [HPr protein]-L-serine + ATP = [HPr protein]-O-phospho-L-serine + ADP + H(+). The enzyme catalyses [HPr protein]-O-phospho-L-serine + phosphate + H(+) = [HPr protein]-L-serine + diphosphate. Catalyzes the ATP- as well as the pyrophosphate-dependent phosphorylation of a specific serine residue in HPr, a phosphocarrier protein of the phosphoenolpyruvate-dependent sugar phosphotransferase system (PTS). HprK/P also catalyzes the pyrophosphate-producing, inorganic phosphate-dependent dephosphorylation (phosphorolysis) of seryl-phosphorylated HPr (P-Ser-HPr). The two antagonistic activities of HprK/P are regulated by several intracellular metabolites, which change their concentration in response to the absence or presence of rapidly metabolisable carbon sources (glucose, fructose, etc.) in the growth medium. Also phosphorylates/dephosphorylates the HPr-like catabolite repression protein crh on a specific serine residue. Therefore, by controlling the phosphorylation state of HPr and crh, HPrK/P is a sensor enzyme that plays a major role in the regulation of carbon metabolism and sugar transport: it mediates carbon catabolite repression (CCR), and regulates PTS-catalyzed carbohydrate uptake and inducer exclusion. This is HPr kinase/phosphorylase from Bacillus cytotoxicus (strain DSM 22905 / CIP 110041 / 391-98 / NVH 391-98).